The primary structure comprises 359 residues: Cysteine/Cysteine sulfinic acid decarboxylase (359 aa).

This sequence in the N-terminal section; belongs to the HFCD (homo-oligomeric flavin containing Cys decarboxylase) superfamily. In the C-terminal section; belongs to the PPC synthetase family.

The enzyme catalyses L-cysteine + H(+) = cysteamine + CO2. It catalyses the reaction 3-sulfino-L-alanine + H(+) = hypotaurine + CO2. Its activity is regulated as follows. Slightly stimulated in the presence of 1 mM Mg(2+). Catalyzes the decarboxylation of L-cysteine to cysteamine and of 3-sulfino-L-alanine (cysteine sulfinic acid) to hypotaurine. Also catalyzes the decarboxylation of various amino acids such as L-lysine, L-glutamate, L-asparaginate and L-proline. In vitro, shows highest activity with L-cysteine as substrate. The polypeptide is Cysteine/Cysteine sulfinic acid decarboxylase (Unknown prokaryotic organism).